The sequence spans 164 residues: Phosphopantetheine adenylyltransferase (164 aa).

Position 9 (T9) interacts with substrate. ATP-binding positions include 9–10 (TF) and H17. Positions 41, 76, and 90 each coordinate substrate. ATP-binding positions include 91–93 (GLR), E101, and 126–132 (YQFVSSS).

Belongs to the bacterial CoaD family. As to quaternary structure, homohexamer. It depends on Mg(2+) as a cofactor.

It localises to the cytoplasm. It catalyses the reaction (R)-4'-phosphopantetheine + ATP + H(+) = 3'-dephospho-CoA + diphosphate. It participates in cofactor biosynthesis; coenzyme A biosynthesis; CoA from (R)-pantothenate: step 4/5. In terms of biological role, reversibly transfers an adenylyl group from ATP to 4'-phosphopantetheine, yielding dephospho-CoA (dPCoA) and pyrophosphate. This is Phosphopantetheine adenylyltransferase from Coprothermobacter proteolyticus (strain ATCC 35245 / DSM 5265 / OCM 4 / BT).